A 184-amino-acid polypeptide reads, in one-letter code: Elongation factor P (184 aa).

The protein belongs to the elongation factor P family.

It is found in the cytoplasm. It functions in the pathway protein biosynthesis; polypeptide chain elongation. Functionally, involved in peptide bond synthesis. Stimulates efficient translation and peptide-bond synthesis on native or reconstituted 70S ribosomes in vitro. Probably functions indirectly by altering the affinity of the ribosome for aminoacyl-tRNA, thus increasing their reactivity as acceptors for peptidyl transferase. The chain is Elongation factor P from Acidovorax ebreus (strain TPSY) (Diaphorobacter sp. (strain TPSY)).